Consider the following 404-residue polypeptide: Protein translocase subunit SecD (404 aa).

Helical transmembrane passes span 7 to 27 (HYIWLFLVIFVPALILYFNKV), 239 to 259 (LIALGVISVFMIAIYKIPGIV), 262 to 282 (IALLINGVLVLGLLSGIGAAL), 283 to 303 (TLPGIAGFILTLGMAVDSNVI), 330 to 350 (FPAIIDGNITTLLVAAVLFFL), and 357 to 377 (GFAVTLSLGVVATIITGVFVS).

Belongs to the SecD/SecF family. SecD subfamily. As to quaternary structure, forms a complex with SecF. Part of the essential Sec protein translocation apparatus which comprises SecA, SecYEG and auxiliary proteins SecDF. Other proteins may also be involved.

It localises to the cell inner membrane. Its function is as follows. Part of the Sec protein translocase complex. Interacts with the SecYEG preprotein conducting channel. SecDF uses the proton motive force (PMF) to complete protein translocation after the ATP-dependent function of SecA. This is Protein translocase subunit SecD from Leptotrichia buccalis (strain ATCC 14201 / DSM 1135 / JCM 12969 / NCTC 10249 / C-1013-b).